A 172-amino-acid chain; its full sequence is Large ribosomal subunit protein uL10 (172 aa).

The protein belongs to the universal ribosomal protein uL10 family. Part of the ribosomal stalk of the 50S ribosomal subunit. The N-terminus interacts with L11 and the large rRNA to form the base of the stalk. The C-terminus forms an elongated spine to which L12 dimers bind in a sequential fashion forming a multimeric L10(L12)X complex.

Functionally, forms part of the ribosomal stalk, playing a central role in the interaction of the ribosome with GTP-bound translation factors. The polypeptide is Large ribosomal subunit protein uL10 (Rhizobium etli (strain CIAT 652)).